Reading from the N-terminus, the 540-residue chain is Collagen alpha-1(XXIII) chain (540 aa).

Residues 1–26 show a composition bias toward gly residues; that stretch reads MGPGERAGGGGDAGKGNAAGGGGGGR. The tract at residues 1 to 28 is disordered; that stretch reads MGPGERAGGGGDAGKGNAAGGGGGGRSA. Over 1 to 34 the chain is Cytoplasmic; it reads MGPGERAGGGGDAGKGNAAGGGGGGRSATTAGSR. A helical; Signal-anchor for type II membrane protein membrane pass occupies residues 35-56; the sequence is AVSALCLLLSVGSAAACLLLGV. Residues 57–540 are Extracellular-facing; that stretch reads QAAALQGRVA…GLPVPGCWHK (484 aa). 2 disordered regions span residues 109 to 304 and 316 to 540; these read AREA…GEQG and LDAL…CWHK. Collagen-like domains are found at residues 124–243, 251–305, 321–380, 412–460, and 463–522; these read GRRG…PGKK, QPGP…EQGD, GPPG…MGLS, GPPG…GPPG, and GLPG…PGLD. Low complexity-rich tracts occupy residues 140–156 and 168–183; these read QSGR…DGKP and PGDF…DGAA. The span at 185–195 shows a compositional bias: pro residues; that stretch reads PPGPPGPPGAR. The span at 322–334 shows a compositional bias: pro residues; it reads PPGPQGPPGPPGI. Residues 350–362 are compositionally biased toward basic and acidic residues; sequence DGEKGPKGQKGDP. Residues 411 to 422 show a composition bias toward pro residues; that stretch reads PGPPGPPGPPGP. Basic and acidic residues-rich tracts occupy residues 435–444 and 486–503; these read DGAKGEKGAS and RGEK…ERGV.

In terms of assembly, homotrimer. Post-translationally, undergoes proteolytic cleavage by furin protease to yield a 60 kDa soluble form that forms a homotrimer and exhibits a low affinity interaction with heparin.

Its subcellular location is the cell membrane. The sequence is that of Collagen alpha-1(XXIII) chain (COL23A1) from Homo sapiens (Human).